The chain runs to 606 residues: Glutamine--fructose-6-phosphate aminotransferase [isomerizing] (606 aa).

The Nucleophile; for GATase activity role is filled by cysteine 2. Residues cysteine 2–aspartate 217 enclose the Glutamine amidotransferase type-2 domain. SIS domains follow at residues tyrosine 284–tyrosine 423 and leucine 455–proline 596. Lysine 601 functions as the For Fru-6P isomerization activity in the catalytic mechanism.

In terms of assembly, homodimer.

Its subcellular location is the cytoplasm. It carries out the reaction D-fructose 6-phosphate + L-glutamine = D-glucosamine 6-phosphate + L-glutamate. In terms of biological role, catalyzes the first step in hexosamine metabolism, converting fructose-6P into glucosamine-6P using glutamine as a nitrogen source. In Thermotoga maritima (strain ATCC 43589 / DSM 3109 / JCM 10099 / NBRC 100826 / MSB8), this protein is Glutamine--fructose-6-phosphate aminotransferase [isomerizing].